The sequence spans 488 residues: 1-deoxy-D-xylulose 5-phosphate reductoisomerase, apicoplastic (488 aa).

The N-terminal 72 residues, 1–72, are a transit peptide targeting the apicoplast; that stretch reads MKKYIYIYFF…LCKKDLIDIG (72 aa). Residues 86 to 89 and 115 to 117 each bind NADP(+); these read TGSI and NKS. K205 contributes to the 1-deoxy-D-xylulose 5-phosphate binding site. Residue E206 coordinates NADP(+). Residue D231 coordinates Mn(2+). 1-deoxy-D-xylulose 5-phosphate is bound by residues S232, E233, S270, and H293. E233 contacts Mn(2+). G299 is a binding site for NADP(+). 4 residues coordinate 1-deoxy-D-xylulose 5-phosphate: S306, N311, K312, and E315. Position 315 (E315) interacts with Mn(2+).

The protein belongs to the DXR family. In terms of assembly, homodimer. The cofactor is Mg(2+). Requires Mn(2+) as cofactor.

The protein localises to the plastid. It localises to the apicoplast. It carries out the reaction 2-C-methyl-D-erythritol 4-phosphate + NADP(+) = 1-deoxy-D-xylulose 5-phosphate + NADPH + H(+). Its pathway is isoprenoid biosynthesis; isopentenyl diphosphate biosynthesis via DXP pathway; isopentenyl diphosphate from 1-deoxy-D-xylulose 5-phosphate: step 1/6. Its activity is regulated as follows. Inhibited by fosmidomycin and its derivatives. Catalyzes the NADPH-dependent rearrangement and reduction of 1-deoxy-D-xylulose-5-phosphate (DXP) to 2-C-methyl-D-erythritol 4-phosphate (MEP). The polypeptide is 1-deoxy-D-xylulose 5-phosphate reductoisomerase, apicoplastic (DXR) (Plasmodium falciparum (isolate 3D7)).